The sequence spans 218 residues: MGQKVNPVGLRIGVIRDWESKWFAGKDYADFLHEDLKIREFISKRLSDASVSKVEIERAANRVNITIHTAKPGMVIGKGGSEVEALRKALNSLTGKRVHINILEIKRADLDAQLVAENIARQLENRISFRRAQKQTIQRTMRAGAQGIKTMVSGRLGGADIARSEYYSEGTVPLHTLRADIDYATAEADTTYGKLGVKVWIYRGEVLPTKKNTAEGGK.

The KH type-2 domain maps to isoleucine 38–lysine 106.

This sequence belongs to the universal ribosomal protein uS3 family. As to quaternary structure, part of the 30S ribosomal subunit. Forms a tight complex with proteins S10 and S14.

Its function is as follows. Binds the lower part of the 30S subunit head. Binds mRNA in the 70S ribosome, positioning it for translation. This chain is Small ribosomal subunit protein uS3, found in Bacillus pumilus (strain SAFR-032).